The primary structure comprises 406 residues: Argininosuccinate synthase (406 aa).

ATP-binding positions include 13–21 (AYSGGLDTS) and Ala40. Residues Tyr91 and Ser96 each contribute to the L-citrulline site. Gly121 serves as a coordination point for ATP. Thr123, Asn127, and Asp128 together coordinate L-aspartate. Residue Asn127 coordinates L-citrulline. L-citrulline contacts are provided by Arg131, Ser182, Ser191, Glu267, and Tyr279.

The protein belongs to the argininosuccinate synthase family. Type 1 subfamily. Homotetramer.

The protein resides in the cytoplasm. The enzyme catalyses L-citrulline + L-aspartate + ATP = 2-(N(omega)-L-arginino)succinate + AMP + diphosphate + H(+). It participates in amino-acid biosynthesis; L-arginine biosynthesis; L-arginine from L-ornithine and carbamoyl phosphate: step 2/3. The sequence is that of Argininosuccinate synthase from Brucella abortus (strain S19).